Consider the following 468-residue polypeptide: ATP synthase subunit beta (468 aa).

Residue 155-162 (GGAGVGKT) coordinates ATP.

This sequence belongs to the ATPase alpha/beta chains family. In terms of assembly, F-type ATPases have 2 components, CF(1) - the catalytic core - and CF(0) - the membrane proton channel. CF(1) has five subunits: alpha(3), beta(3), gamma(1), delta(1), epsilon(1). CF(0) has three main subunits: a(1), b(2) and c(9-12). The alpha and beta chains form an alternating ring which encloses part of the gamma chain. CF(1) is attached to CF(0) by a central stalk formed by the gamma and epsilon chains, while a peripheral stalk is formed by the delta and b chains.

It is found in the cell membrane. It catalyses the reaction ATP + H2O + 4 H(+)(in) = ADP + phosphate + 5 H(+)(out). Its function is as follows. Produces ATP from ADP in the presence of a proton gradient across the membrane. The catalytic sites are hosted primarily by the beta subunits. In Bacillus cereus (strain G9842), this protein is ATP synthase subunit beta.